We begin with the raw amino-acid sequence, 754 residues long: Glutathione biosynthesis bifunctional protein GshAB (754 aa).

The glutamate--cysteine ligase stretch occupies residues 1–333 (MHINQLLQHA…KAQKLNDKIA (333 aa)). The ATP-grasp domain maps to 489–752 (KKILRENGYP…LAKLFPEIST (264 aa)). 516-574 (SQIKNKPIVVKPKTTNFGLGISIFETAASHNDYEKALDIAFIEDYSVLVEEFIPGTEYR) contacts ATP. Mg(2+)-binding residues include Asp696, Glu717, and Asn719. Asp696, Glu717, and Asn719 together coordinate Mn(2+).

This sequence in the N-terminal section; belongs to the glutamate--cysteine ligase type 1 family. Type 2 subfamily. Monomer. Requires Mg(2+) as cofactor. Mn(2+) is required as a cofactor.

It catalyses the reaction L-cysteine + L-glutamate + ATP = gamma-L-glutamyl-L-cysteine + ADP + phosphate + H(+). The catalysed reaction is gamma-L-glutamyl-L-cysteine + glycine + ATP = glutathione + ADP + phosphate + H(+). Its pathway is sulfur metabolism; glutathione biosynthesis; glutathione from L-cysteine and L-glutamate: step 1/2. The protein operates within sulfur metabolism; glutathione biosynthesis; glutathione from L-cysteine and L-glutamate: step 2/2. Synthesizes glutathione from L-glutamate and L-cysteine via gamma-L-glutamyl-L-cysteine. This chain is Glutathione biosynthesis bifunctional protein GshAB, found in Streptococcus mutans serotype c (strain ATCC 700610 / UA159).